Reading from the N-terminus, the 738-residue chain is Vesicle-fusing ATPase (738 aa).

Residues 507–512 (NGIINY) and 547–554 (PGCGKSSL) each bind ATP.

The protein belongs to the AAA ATPase family. In terms of assembly, interacts with syn7A, snpA and snpC. Mg(2+) serves as cofactor.

It localises to the cytoplasmic vesicle membrane. It is found in the endosome membrane. It catalyses the reaction ATP + H2O = ADP + phosphate + H(+). Its function is as follows. Required for vesicle-mediated transport. Involved in endocytosis and endosome-endosome fusion. May be required for transport from the endoplasmic reticulum to the Golgi stack, and for the fusion of transport vesicles within the Golgi cisternae. Required for cell polarity, locomotion and chemotaxis. In Dictyostelium discoideum (Social amoeba), this protein is Vesicle-fusing ATPase (nsfA).